We begin with the raw amino-acid sequence, 214 residues long: Pyridoxine/pyridoxamine 5'-phosphate oxidase (214 aa).

Substrate is bound by residues 8-11 and R66; that span reads RLSY. FMN is bound by residues 61 to 66, 76 to 77, K83, and Q105; these read RTVLLR and FT. Y123, R127, and S131 together coordinate substrate. The segment at 126–146 is disordered; that stretch reads SRPRESQLAAHASDPQSAPVS. FMN-binding positions include 141-142 and W187; that span reads QS. 193-195 serves as a coordination point for substrate; it reads RMH. FMN is bound at residue R197.

This sequence belongs to the pyridoxamine 5'-phosphate oxidase family. In terms of assembly, homodimer. It depends on FMN as a cofactor.

The catalysed reaction is pyridoxamine 5'-phosphate + O2 + H2O = pyridoxal 5'-phosphate + H2O2 + NH4(+). It catalyses the reaction pyridoxine 5'-phosphate + O2 = pyridoxal 5'-phosphate + H2O2. Its pathway is cofactor metabolism; pyridoxal 5'-phosphate salvage; pyridoxal 5'-phosphate from pyridoxamine 5'-phosphate: step 1/1. The protein operates within cofactor metabolism; pyridoxal 5'-phosphate salvage; pyridoxal 5'-phosphate from pyridoxine 5'-phosphate: step 1/1. Its function is as follows. Catalyzes the oxidation of either pyridoxine 5'-phosphate (PNP) or pyridoxamine 5'-phosphate (PMP) into pyridoxal 5'-phosphate (PLP). The chain is Pyridoxine/pyridoxamine 5'-phosphate oxidase from Deinococcus deserti (strain DSM 17065 / CIP 109153 / LMG 22923 / VCD115).